The primary structure comprises 360 residues: Pyrimidine monooxygenase RutA (360 aa).

FMN-binding positions include 49-50 (IK), asparagine 115, glutamate 124, 140-141 (RY), and serine 190.

Belongs to the NtaA/SnaA/DszA monooxygenase family. RutA subfamily.

It carries out the reaction uracil + FMNH2 + NADH + O2 = (Z)-3-ureidoacrylate + FMN + NAD(+) + H2O + H(+). The catalysed reaction is thymine + FMNH2 + NADH + O2 = (Z)-2-methylureidoacrylate + FMN + NAD(+) + H2O + H(+). Functionally, catalyzes the pyrimidine ring opening between N-3 and C-4 by an unusual flavin hydroperoxide-catalyzed mechanism, adding oxygen atoms in the process to yield ureidoacrylate peracid, that immediately reacts with FMN forming ureidoacrylate and FMN-N(5)-oxide. The FMN-N(5)-oxide reacts spontaneously with NADH to produce FMN. Requires the flavin reductase RutF to regenerate FMN in vivo. The chain is Pyrimidine monooxygenase RutA from Pseudomonas savastanoi pv. phaseolicola (strain 1448A / Race 6) (Pseudomonas syringae pv. phaseolicola (strain 1448A / Race 6)).